A 352-amino-acid chain; its full sequence is MRPLNVQIRLGNLRHNYRILKEMHGGKLLAVVKADAYGHGAVRCAFALADLADGFAVATIDEGIRLRESGITHPIVLLEGVFEASEYEAVEQYSLWPAVGNQWQLEALLSRHWKKPVKVWLKMDSGMHRTGFFPHDYASVYAALKQSEYVDSIVKFSHFSCADEPESGMTEIQMEAFDLGTEGLEGEESLANSAAILNVPEARRDWGRAGLALYGISPFGGSDDRLKPVMRLSTRIFGERVLQPHSPIGYGATFYTSKSTRVGLIACGYADGYPRRAPSNSPVAVDGKLTRVIGRVSMDMMTIELDASQEGLGHEVELWGDTVNINTVAEAAGTIPYELMCNIKRAKFTYIE.

Residue Lys-33 is the Proton acceptor; specific for D-alanine of the active site. Lys-33 carries the post-translational modification N6-(pyridoxal phosphate)lysine. Arg-129 provides a ligand contact to substrate. The Proton acceptor; specific for L-alanine role is filled by Tyr-250. Residue Met-298 participates in substrate binding.

The protein belongs to the alanine racemase family. The cofactor is pyridoxal 5'-phosphate.

The catalysed reaction is L-alanine = D-alanine. The protein operates within amino-acid biosynthesis; D-alanine biosynthesis; D-alanine from L-alanine: step 1/1. Its function is as follows. Catalyzes the interconversion of L-alanine and D-alanine. May also act on other amino acids. In Neisseria meningitidis serogroup A / serotype 4A (strain DSM 15465 / Z2491), this protein is Alanine racemase (alr).